Reading from the N-terminus, the 612-residue chain is Dihydroxy-acid dehydratase (612 aa).

Position 81 (aspartate 81) interacts with Mg(2+). Residue cysteine 122 coordinates [2Fe-2S] cluster. Mg(2+) contacts are provided by aspartate 123 and lysine 124. Lysine 124 is modified (N6-carboxylysine). Cysteine 193 is a binding site for [2Fe-2S] cluster. Glutamate 489 is a binding site for Mg(2+). The active-site Proton acceptor is the serine 515.

This sequence belongs to the IlvD/Edd family. Homodimer. The cofactor is [2Fe-2S] cluster. It depends on Mg(2+) as a cofactor.

The enzyme catalyses (2R)-2,3-dihydroxy-3-methylbutanoate = 3-methyl-2-oxobutanoate + H2O. It carries out the reaction (2R,3R)-2,3-dihydroxy-3-methylpentanoate = (S)-3-methyl-2-oxopentanoate + H2O. It functions in the pathway amino-acid biosynthesis; L-isoleucine biosynthesis; L-isoleucine from 2-oxobutanoate: step 3/4. It participates in amino-acid biosynthesis; L-valine biosynthesis; L-valine from pyruvate: step 3/4. In terms of biological role, functions in the biosynthesis of branched-chain amino acids. Catalyzes the dehydration of (2R,3R)-2,3-dihydroxy-3-methylpentanoate (2,3-dihydroxy-3-methylvalerate) into 2-oxo-3-methylpentanoate (2-oxo-3-methylvalerate) and of (2R)-2,3-dihydroxy-3-methylbutanoate (2,3-dihydroxyisovalerate) into 2-oxo-3-methylbutanoate (2-oxoisovalerate), the penultimate precursor to L-isoleucine and L-valine, respectively. This is Dihydroxy-acid dehydratase from Pseudomonas paraeruginosa (strain DSM 24068 / PA7) (Pseudomonas aeruginosa (strain PA7)).